A 306-amino-acid polypeptide reads, in one-letter code: uncharacterized protein (306 aa).

Positions histidine 40–glutamate 156 are disordered. The span at glutamate 64–leucine 73 shows a compositional bias: low complexity. The segment covering lysine 129 to serine 139 has biased composition (basic residues).

This is an uncharacterized protein from Rattus norvegicus (Rat).